Here is a 190-residue protein sequence, read N- to C-terminus: Threonylcarbamoyl-AMP synthase (190 aa).

One can recognise a YrdC-like domain in the interval 7-190 (IGSIAAAVDL…ALTGELFRQG (184 aa)).

Belongs to the SUA5 family. TsaC subfamily.

The protein resides in the cytoplasm. The catalysed reaction is L-threonine + hydrogencarbonate + ATP = L-threonylcarbamoyladenylate + diphosphate + H2O. Required for the formation of a threonylcarbamoyl group on adenosine at position 37 (t(6)A37) in tRNAs that read codons beginning with adenine. Catalyzes the conversion of L-threonine, HCO(3)(-)/CO(2) and ATP to give threonylcarbamoyl-AMP (TC-AMP) as the acyladenylate intermediate, with the release of diphosphate. The chain is Threonylcarbamoyl-AMP synthase from Salmonella typhimurium (strain LT2 / SGSC1412 / ATCC 700720).